Consider the following 130-residue polypeptide: MARQTRKVSPTKIKKRTYRGIVYIQAGHHNTIITLANLRGEVLCWSSAGACGFRGKRKATTFAAKKAAEVVAKKSREFALNEAKILVTGPGQGRETAIREIFKAGIKVNVIREKTGIPHNGCRPPKKRRV.

This sequence belongs to the universal ribosomal protein uS11 family. In terms of assembly, part of the 30S ribosomal subunit.

The protein resides in the plastid. Its subcellular location is the chloroplast. The sequence is that of Small ribosomal subunit protein uS11c from Tetradesmus obliquus (Green alga).